The chain runs to 209 residues: GTP cyclohydrolase-2 (209 aa).

49-53 (RIHSE) provides a ligand contact to GTP. Zn(2+) is bound by residues cysteine 54, cysteine 65, and cysteine 67. GTP-binding positions include glutamine 70, 92–94 (EGR), and threonine 114. Aspartate 126 acts as the Proton acceptor in catalysis. Catalysis depends on arginine 128, which acts as the Nucleophile. Threonine 149 and lysine 154 together coordinate GTP.

The protein belongs to the GTP cyclohydrolase II family. Zn(2+) serves as cofactor.

The catalysed reaction is GTP + 4 H2O = 2,5-diamino-6-hydroxy-4-(5-phosphoribosylamino)-pyrimidine + formate + 2 phosphate + 3 H(+). Its pathway is cofactor biosynthesis; riboflavin biosynthesis; 5-amino-6-(D-ribitylamino)uracil from GTP: step 1/4. Its function is as follows. Catalyzes the conversion of GTP to 2,5-diamino-6-ribosylamino-4(3H)-pyrimidinone 5'-phosphate (DARP), formate and pyrophosphate. The protein is GTP cyclohydrolase-2 of Shewanella halifaxensis (strain HAW-EB4).